Consider the following 188-residue polypeptide: MKIGVLGVQGDVREHVEALHKLGVETLIVKLPEHLDMVDGLILPGGESTTMIRILKEMNMDEKLVEKINDGLPVFATCAGVILLAKRINNYKQEKLGVLDVTVERNAYGRQVESFETFIEIPAIGKDPFRAIFIRAPRIVETGRSVEILAYHEGDPVLVKEGKILASTFHPELTDDLRLHRYFLEMVK.

46–48 is an L-glutamine binding site; sequence GES. Cysteine 78 acts as the Nucleophile in catalysis. L-glutamine contacts are provided by residues arginine 105 and 134 to 135; that span reads IR. Residues histidine 170 and glutamate 172 each act as charge relay system in the active site.

Belongs to the glutaminase PdxT/SNO family. In terms of assembly, in the presence of PdxS, forms a dodecamer of heterodimers. Only shows activity in the heterodimer.

The enzyme catalyses aldehydo-D-ribose 5-phosphate + D-glyceraldehyde 3-phosphate + L-glutamine = pyridoxal 5'-phosphate + L-glutamate + phosphate + 3 H2O + H(+). The catalysed reaction is L-glutamine + H2O = L-glutamate + NH4(+). It participates in cofactor biosynthesis; pyridoxal 5'-phosphate biosynthesis. Catalyzes the hydrolysis of glutamine to glutamate and ammonia as part of the biosynthesis of pyridoxal 5'-phosphate. The resulting ammonia molecule is channeled to the active site of PdxS. The sequence is that of Pyridoxal 5'-phosphate synthase subunit PdxT from Thermotoga neapolitana (strain ATCC 49049 / DSM 4359 / NBRC 107923 / NS-E).